We begin with the raw amino-acid sequence, 124 residues long: Modulator protein MzrA (124 aa).

Residues 1-7 (MINRRMK) are Cytoplasmic-facing. Residues 8-28 (TGFVFHLLLLLLPLVVLVTSS) traverse the membrane as a helical segment. The Periplasmic segment spans residues 29–124 (RRTADDVTLH…KLSQQPFKLG (96 aa)).

The protein belongs to the MzrA family. In terms of assembly, interacts with EnvZ.

It localises to the cell inner membrane. Its function is as follows. Modulates the activity of the EnvZ/OmpR two-component regulatory system, probably by directly modulating EnvZ enzymatic activity and increasing stability of phosphorylated OmpR. The chain is Modulator protein MzrA from Musicola paradisiaca (strain Ech703) (Dickeya paradisiaca).